A 351-amino-acid chain; its full sequence is ATP-dependent protease ATP-binding subunit-like protein (351 aa).

The tract at residues 1-26 is disordered; that stretch reads MPYITDMLRDRNSAATPPAEERSEPV. 79 to 86 lines the ATP pocket; sequence GPTGVGKT.

The protein belongs to the ClpA/ClpB family.

This is ATP-dependent protease ATP-binding subunit-like protein from Rhodococcus erythropolis (Arthrobacter picolinophilus).